The primary structure comprises 123 residues: Holo-[acyl-carrier-protein] synthase (123 aa).

Mg(2+)-binding residues include Asp8 and Glu50.

It belongs to the P-Pant transferase superfamily. AcpS family. It depends on Mg(2+) as a cofactor.

It localises to the cytoplasm. It carries out the reaction apo-[ACP] + CoA = holo-[ACP] + adenosine 3',5'-bisphosphate + H(+). Functionally, transfers the 4'-phosphopantetheine moiety from coenzyme A to a Ser of acyl-carrier-protein. This chain is Holo-[acyl-carrier-protein] synthase, found in Kocuria rhizophila (strain ATCC 9341 / DSM 348 / NBRC 103217 / DC2201).